The following is a 106-amino-acid chain: Putative regulatory protein MalR (106 aa).

Residues 12-106 form the HTH hxlR-type domain; the sequence is CSIEYTLSFM…NLMHKWGQEN (95 aa).

Functionally, potential regulator of the malBH genes. The sequence is that of Putative regulatory protein MalR (malR) from Fusobacterium mortiferum.